We begin with the raw amino-acid sequence, 181 residues long: Translation initiation factor IF-3 (181 aa).

It belongs to the IF-3 family. Monomer.

It is found in the cytoplasm. Its function is as follows. IF-3 binds to the 30S ribosomal subunit and shifts the equilibrium between 70S ribosomes and their 50S and 30S subunits in favor of the free subunits, thus enhancing the availability of 30S subunits on which protein synthesis initiation begins. The polypeptide is Translation initiation factor IF-3 (Mycoplasma capricolum subsp. capricolum (strain California kid / ATCC 27343 / NCTC 10154)).